Reading from the N-terminus, the 477-residue chain is Glycogen synthase (477 aa).

Lys15 serves as a coordination point for ADP-alpha-D-glucose.

Belongs to the glycosyltransferase 1 family. Bacterial/plant glycogen synthase subfamily.

It carries out the reaction [(1-&gt;4)-alpha-D-glucosyl](n) + ADP-alpha-D-glucose = [(1-&gt;4)-alpha-D-glucosyl](n+1) + ADP + H(+). Its pathway is glycan biosynthesis; glycogen biosynthesis. Synthesizes alpha-1,4-glucan chains using ADP-glucose. The chain is Glycogen synthase from Salmonella arizonae (strain ATCC BAA-731 / CDC346-86 / RSK2980).